A 142-amino-acid chain; its full sequence is Small ribosomal subunit protein bS6 (142 aa).

A compositionally biased stretch (basic and acidic residues) spans 110–133 (NKKPSHAKEKHEKTEHTHSHHTEE). The disordered stretch occupies residues 110–142 (NKKPSHAKEKHEKTEHTHSHHTEEAESVGSHSE).

Belongs to the bacterial ribosomal protein bS6 family.

In terms of biological role, binds together with bS18 to 16S ribosomal RNA. This Helicobacter pylori (strain ATCC 700392 / 26695) (Campylobacter pylori) protein is Small ribosomal subunit protein bS6 (rpsF).